A 289-amino-acid polypeptide reads, in one-letter code: Protease HtpX homolog (289 aa).

2 helical membrane passes run 7 to 26 (TAAL…YWVI) and 31 to 48 (GLII…FSWY). His132 is a Zn(2+) binding site. The active site involves Glu133. His136 serves as a coordination point for Zn(2+). Helical transmembrane passes span 151–171 (VAGA…FGGG) and 182–202 (LGVL…QLAI). Glu207 contributes to the Zn(2+) binding site.

The protein belongs to the peptidase M48B family. Zn(2+) serves as cofactor.

It is found in the cell inner membrane. The sequence is that of Protease HtpX homolog from Nostoc punctiforme (strain ATCC 29133 / PCC 73102).